The sequence spans 298 residues: Inosose dehydratase (298 aa).

This sequence belongs to the IolE/MocC family. It depends on glutathione as a cofactor. Co(2+) serves as cofactor. The cofactor is Mn(2+).

It catalyses the reaction scyllo-inosose = 3D-3,5/4-trihydroxycyclohexane-1,2-dione + H2O. Its function is as follows. Catalyzes the dehydration of inosose (2-keto-myo-inositol, 2KMI or 2,4,6/3,5-pentahydroxycyclohexanone) to 3D-(3,5/4)-trihydroxycyclohexane-1,2-dione (D-2,3-diketo-4-deoxy-epi-inositol). This chain is Inosose dehydratase, found in Histophilus somni (strain 129Pt) (Haemophilus somnus).